Here is an 84-residue protein sequence, read N- to C-terminus: Cytochrome b559 subunit alpha (84 aa).

Residues 24-38 (IIHAVTLPAIFIAGF) form a helical membrane-spanning segment. Histidine 26 is a heme binding site.

Belongs to the PsbE/PsbF family. In terms of assembly, heterodimer of an alpha subunit and a beta subunit. PSII is composed of 1 copy each of membrane proteins PsbA, PsbB, PsbC, PsbD, PsbE, PsbF, PsbH, PsbI, PsbJ, PsbK, PsbL, PsbM, PsbT, PsbX, PsbY, Psb30/Ycf12, peripheral proteins PsbO, CyanoQ (PsbQ), PsbU, PsbV and a large number of cofactors. It forms dimeric complexes. Requires heme b as cofactor.

It localises to the cellular thylakoid membrane. Its function is as follows. This b-type cytochrome is tightly associated with the reaction center of photosystem II (PSII). PSII is a light-driven water:plastoquinone oxidoreductase that uses light energy to abstract electrons from H(2)O, generating O(2) and a proton gradient subsequently used for ATP formation. It consists of a core antenna complex that captures photons, and an electron transfer chain that converts photonic excitation into a charge separation. The protein is Cytochrome b559 subunit alpha of Prochlorococcus marinus subsp. pastoris (strain CCMP1986 / NIES-2087 / MED4).